Here is a 65-residue protein sequence, read N- to C-terminus: Large ribosomal subunit protein bL35 (65 aa).

A compositionally biased stretch (basic residues) spans methionine 1–glutamine 15. The segment at methionine 1–alanine 27 is disordered.

Belongs to the bacterial ribosomal protein bL35 family.

The sequence is that of Large ribosomal subunit protein bL35 from Bordetella petrii (strain ATCC BAA-461 / DSM 12804 / CCUG 43448).